A 174-amino-acid chain; its full sequence is Adenylosuccinate synthetase (174 aa).

Residues 13–19 (GDEGKGK) and 41–43 (GHT) each bind GTP. The active-site Proton acceptor is Asp14. Residues Asp14 and Gly41 each coordinate Mg(2+). IMP contacts are provided by residues 14-17 (DEGK), 39-42 (NAGH), Thr130, and Arg144. Catalysis depends on His42, which acts as the Proton donor.

This sequence belongs to the adenylosuccinate synthetase family. Homodimer. The cofactor is Mg(2+).

It is found in the cytoplasm. The catalysed reaction is IMP + L-aspartate + GTP = N(6)-(1,2-dicarboxyethyl)-AMP + GDP + phosphate + 2 H(+). It functions in the pathway purine metabolism; AMP biosynthesis via de novo pathway; AMP from IMP: step 1/2. In terms of biological role, plays an important role in the de novo pathway of purine nucleotide biosynthesis. Catalyzes the first committed step in the biosynthesis of AMP from IMP. This chain is Adenylosuccinate synthetase, found in Stutzerimonas stutzeri (Pseudomonas stutzeri).